Here is a 279-residue protein sequence, read N- to C-terminus: Undecaprenyl-diphosphatase (279 aa).

The next 8 helical transmembrane spans lie at 2 to 22 (LIIE…TEWL), 44 to 64 (AFIE…VMLI), 85 to 105 (WQLW…AVPL), 113 to 133 (FYFM…FIWI), 163 to 183 (VLSI…AIIL), 188 to 208 (TVAA…YSGL), 223 to 243 (AQVL…LLAI), and 255 to 275 (FTIF…YSFF).

It belongs to the UppP family.

It is found in the cell membrane. It catalyses the reaction di-trans,octa-cis-undecaprenyl diphosphate + H2O = di-trans,octa-cis-undecaprenyl phosphate + phosphate + H(+). Catalyzes the dephosphorylation of undecaprenyl diphosphate (UPP). Confers resistance to bacitracin. This chain is Undecaprenyl-diphosphatase, found in Streptococcus pyogenes serotype M28 (strain MGAS6180).